The following is a 612-amino-acid chain: Dihydroxy-acid dehydratase (612 aa).

Position 81 (Asp-81) interacts with Mg(2+). A [2Fe-2S] cluster-binding site is contributed by Cys-122. Positions 123 and 124 each coordinate Mg(2+). Lys-124 carries the post-translational modification N6-carboxylysine. Cys-195 provides a ligand contact to [2Fe-2S] cluster. Glu-491 is a Mg(2+) binding site. The active-site Proton acceptor is Ser-517.

Belongs to the IlvD/Edd family. Homodimer. Requires [2Fe-2S] cluster as cofactor. Mg(2+) serves as cofactor.

It carries out the reaction (2R)-2,3-dihydroxy-3-methylbutanoate = 3-methyl-2-oxobutanoate + H2O. The enzyme catalyses (2R,3R)-2,3-dihydroxy-3-methylpentanoate = (S)-3-methyl-2-oxopentanoate + H2O. It participates in amino-acid biosynthesis; L-isoleucine biosynthesis; L-isoleucine from 2-oxobutanoate: step 3/4. The protein operates within amino-acid biosynthesis; L-valine biosynthesis; L-valine from pyruvate: step 3/4. Its function is as follows. Functions in the biosynthesis of branched-chain amino acids. Catalyzes the dehydration of (2R,3R)-2,3-dihydroxy-3-methylpentanoate (2,3-dihydroxy-3-methylvalerate) into 2-oxo-3-methylpentanoate (2-oxo-3-methylvalerate) and of (2R)-2,3-dihydroxy-3-methylbutanoate (2,3-dihydroxyisovalerate) into 2-oxo-3-methylbutanoate (2-oxoisovalerate), the penultimate precursor to L-isoleucine and L-valine, respectively. This is Dihydroxy-acid dehydratase from Rhizobium rhizogenes (strain K84 / ATCC BAA-868) (Agrobacterium radiobacter).